A 125-amino-acid polypeptide reads, in one-letter code: Large ribosomal subunit protein bL19 (125 aa).

The protein belongs to the bacterial ribosomal protein bL19 family.

Functionally, this protein is located at the 30S-50S ribosomal subunit interface and may play a role in the structure and function of the aminoacyl-tRNA binding site. This is Large ribosomal subunit protein bL19 from Wolbachia pipientis subsp. Culex pipiens (strain wPip).